Consider the following 364-residue polypeptide: Pyrimidine monooxygenase RutA (364 aa).

FMN is bound by residues 49 to 50 (IK), asparagine 115, glutamate 124, 140 to 141 (RY), and serine 190.

Belongs to the NtaA/SnaA/DszA monooxygenase family. RutA subfamily.

It carries out the reaction uracil + FMNH2 + NADH + O2 = (Z)-3-ureidoacrylate + FMN + NAD(+) + H2O + H(+). The enzyme catalyses thymine + FMNH2 + NADH + O2 = (Z)-2-methylureidoacrylate + FMN + NAD(+) + H2O + H(+). Catalyzes the pyrimidine ring opening between N-3 and C-4 by an unusual flavin hydroperoxide-catalyzed mechanism, adding oxygen atoms in the process to yield ureidoacrylate peracid, that immediately reacts with FMN forming ureidoacrylate and FMN-N(5)-oxide. The FMN-N(5)-oxide reacts spontaneously with NADH to produce FMN. Requires the flavin reductase RutF to regenerate FMN in vivo. The protein is Pyrimidine monooxygenase RutA of Methylorubrum extorquens (strain ATCC 14718 / DSM 1338 / JCM 2805 / NCIMB 9133 / AM1) (Methylobacterium extorquens).